The chain runs to 67 residues: Large ribosomal subunit protein bL32 (67 aa).

The span at 1–19 shows a compositional bias: basic residues; sequence MAVPKRKMSRSNTRARRSQ. Residues 1-21 form a disordered region; that stretch reads MAVPKRKMSRSNTRARRSQWK.

It belongs to the bacterial ribosomal protein bL32 family.

The protein is Large ribosomal subunit protein bL32 of Clavibacter sepedonicus (Clavibacter michiganensis subsp. sepedonicus).